The following is a 2703-amino-acid chain: Neurogenic locus Notch protein (2703 aa).

The signal sequence occupies residues 1 to 52 (MQSQRSRRRSRAPNTWICFWINKMHAVASLPASLPLLLLTLAFANLPNTVRG). Over 53–1745 (TDTALVAASC…NGEPPANVKY (1693 aa)) the chain is Extracellular. EGF-like domains are found at residues 58-95 (VAASCTSVGCQNGGTCVTQLNGKTYCACDSHYVGDYCE), 96-136 (HRNP…SLCE), 139-176 (VPNACDHVTCLNGGTCQLKTLEEYTCACANGYTGERCE), and 177-215 (TKNLCASSPCRNGATCTALAGSSSFTCSCPPGFTGDTCS). Intrachain disulfides connect Cys-62-Cys-73, Cys-67-Cys-83, Cys-85-Cys-94, Cys-100-Cys-111, Cys-105-Cys-124, Cys-126-Cys-135, Cys-143-Cys-154, Cys-148-Cys-164, Cys-166-Cys-175, Cys-181-Cys-192, Cys-186-Cys-203, Cys-205-Cys-214, Cys-221-Cys-232, Cys-226-Cys-241, Cys-243-Cys-252, Cys-259-Cys-270, Cys-264-Cys-279, Cys-281-Cys-290, Cys-297-Cys-308, Cys-302-Cys-317, Cys-319-Cys-328, Cys-335-Cys-349, Cys-343-Cys-358, and Cys-360-Cys-369. Residue Thr-72 is glycosylated (O-linked (Fuc...) threonine). A glycan (O-linked (Fuc...) threonine) is linked at Thr-110. The O-linked (Fuc...) threonine glycan is linked to Thr-153. Ser-183 carries an O-linked (Glc...) serine glycan. Residue Thr-191 is glycosylated (O-linked (Fuc...) threonine). O-linked (GlcNAc...) threonine glycosylation is present at Thr-210. An EGF-like 5; calcium-binding domain is found at 217 to 253 (DIEECQSNPCKYGGTCVNTHGSYQCMCPTGYTGKDCD). The O-linked (Glc...) serine glycan is linked to Ser-223. Residue Thr-231 is glycosylated (O-linked (Fuc...) threonine). Positions 255–291 (KYKPCSPSPCQNGGICRSNGLSYECKCPKGFEGKNCE) constitute an EGF-like 6 domain. The EGF-like 7; calcium-binding domain occupies 293 to 329 (NYDDCLGHLCQNGGTCIDGISDYTCRCPPNFTGRFCQ). Thr-307 carries an O-linked (Fuc...) threonine glycan. N-linked (GlcNAc...) asparagine glycosylation occurs at Asn-322. One can recognise an EGF-like 8; calcium-binding domain in the interval 331-370 (DVDECAQRDHPVCQNGATCTNTHGSYSCICVNGWAGLDCS). Thr-348 carries an O-linked (Fuc...) threonine glycan. N-linked (GlcNAc...) asparagine glycosylation occurs at Asn-371. The EGF-like 9; calcium-binding domain occupies 372 to 408 (NTDDCKQAACFYGATCIDGVGSFYCQCTKGKTGLLCH). Cystine bridges form between Cys-376-Cys-387, Cys-381-Cys-396, Cys-398-Cys-407, Cys-413-Cys-424, Cys-418-Cys-435, Cys-437-Cys-446, Cys-453-Cys-465, and Cys-459-Cys-474. A glycan (O-linked (Fuc...) threonine) is linked at Thr-386. The region spanning 409–447 (LDDACTSNPCHADAICDTSPINGSYACSCATGYKGVDCS) is the EGF-like 10 domain. The O-linked (Glc...) serine glycan is linked to Ser-427. Asn-430 is a glycosylation site (N-linked (GlcNAc...) asparagine). In terms of domain architecture, EGF-like 11; calcium-binding spans 449–486 (DIDECDQGSPCEHNGICVNTPGSYRCNCSQGFTGPRCE). Asn-475 carries N-linked (GlcNAc...) asparagine glycosylation. 78 disulfide bridges follow: Cys-476-Cys-485, Cys-492-Cys-503, Cys-497-Cys-512, Cys-514-Cys-523, Cys-530-Cys-541, Cys-535-Cys-550, Cys-552-Cys-561, Cys-568-Cys-579, Cys-573-Cys-588, Cys-590-Cys-599, Cys-606-Cys-616, Cys-611-Cys-625, Cys-627-Cys-636, Cys-643-Cys-654, Cys-648-Cys-663, Cys-665-Cys-674, Cys-681-Cys-692, Cys-686-Cys-701, Cys-703-Cys-712, Cys-719-Cys-730, Cys-724-Cys-739, Cys-741-Cys-750, Cys-757-Cys-768, Cys-762-Cys-777, Cys-779-Cys-788, Cys-795-Cys-806, Cys-800-Cys-815, Cys-817-Cys-826, Cys-833-Cys-844, Cys-838-Cys-853, Cys-855-Cys-864, Cys-871-Cys-882, Cys-876-Cys-893, Cys-895-Cys-904, Cys-911-Cys-923, Cys-917-Cys-932, Cys-934-Cys-943, Cys-950-Cys-961, Cys-955-Cys-970, Cys-972-Cys-981, Cys-988-Cys-999, Cys-993-Cys-1008, Cys-1010-Cys-1019, Cys-1026-Cys-1037, Cys-1031-Cys-1046, Cys-1048-Cys-1057, Cys-1064-Cys-1075, Cys-1069-Cys-1084, Cys-1086-Cys-1095, Cys-1102-Cys-1113, Cys-1107-Cys-1122, Cys-1124-Cys-1133, Cys-1155-Cys-1160, Cys-1171-Cys-1180, Cys-1187-Cys-1198, Cys-1192-Cys-1207, Cys-1209-Cys-1218, Cys-1225-Cys-1236, Cys-1230-Cys-1245, Cys-1247-Cys-1256, Cys-1263-Cys-1274, Cys-1268-Cys-1283, Cys-1285-Cys-1294, Cys-1301-Cys-1314, Cys-1306-Cys-1323, Cys-1325-Cys-1334, Cys-1341-Cys-1352, Cys-1346-Cys-1361, Cys-1363-Cys-1372, Cys-1379-Cys-1389, Cys-1384-Cys-1400, Cys-1402-Cys-1411, Cys-1419-Cys-1430, Cys-1424-Cys-1439, Cys-1441-Cys-1450, Cys-1482-Cys-1505, Cys-1487-Cys-1500, and Cys-1496-Cys-1512. O-linked (GlcNAc...) threonine glycosylation is present at Thr-481. In terms of domain architecture, EGF-like 12; calcium-binding spans 488–524 (NINECESHPCQNEGSCLDDPGTFRCVCMPGFTGTQCE). O-linked (Glc...) serine glycosylation occurs at Ser-494. A glycan (O-linked (Fuc...) serine) is linked at Ser-502. An O-linked (GlcNAc...) threonine glycan is attached at Thr-519. The region spanning 526–562 (DIDECQSNPCLNDGTCHDKINGFKCSCALGFTGARCQ) is the EGF-like 13; calcium-binding domain. The O-linked (Glc...) serine glycan is linked to Ser-532. One can recognise an EGF-like 14; calcium-binding domain in the interval 564 to 600 (NIDDCQSQPCRNRGICHDSIAGYSCECPPGYTGTSCE). Ser-570 carries O-linked (Glc...) serine glycosylation. The O-linked (GlcNAc...) threonine glycan is linked to Thr-595. The EGF-like 15; calcium-binding domain maps to 602 to 637 (NINDCDSNPCHRGKCIDDVNSFKCLCDPGYTGYICQ). Ser-608 carries O-linked (Glc...) serine glycosylation. Residues 639 to 675 (QINECESNPCQFDGHCQDRVGSYYCQCQAGTSGKNCE) enclose the EGF-like 16; calcium-binding domain. Ser-645 carries O-linked (Glc...) serine glycosylation. Positions 677 to 713 (NVNECHSNPCNNGATCIDGINSYKCQCVPGFTGQHCE) constitute an EGF-like 17; calcium-binding domain. The O-linked (Glc...) serine glycan is linked to Ser-683. The O-linked (Fuc...) threonine glycan is linked to Thr-691. Residues 715 to 751 (NVDECISSPCANNGVCIDQVNGYKCECPRGFYDAHCL) enclose the EGF-like 18; calcium-binding domain. Ser-721 is a glycosylation site (O-linked (Glc...) serine). In terms of domain architecture, EGF-like 19; calcium-binding spans 753-789 (DVDECASNPCVNEGRCEDGINEFICHCPPGYTGKRCE). O-linked (Glc...) serine glycosylation is present at Ser-759. The EGF-like 20; calcium-binding domain maps to 791 to 827 (DIDECSSNPCQHGGTCYDKLNAFSCQCMPGYTGQKCE). Ser-797 carries an O-linked (Glc...) serine glycan. O-linked (Fuc...) threonine glycosylation is present at Thr-805. An O-linked (GlcNAc...) threonine glycan is attached at Thr-822. The EGF-like 21; calcium-binding domain maps to 829–865 (NIDDCVTNPCGNGGTCIDKVNGYKCVCKVPFTGRDCE). Thr-843 carries O-linked (Fuc...) threonine glycosylation. The 39-residue stretch at 867-905 (KMDPCASNRCKNEAKCTPSSNFLDFSCTCKLGYTGRYCD) folds into the EGF-like 22 domain. An EGF-like 23; calcium-binding domain is found at 907–944 (DIDECSLSSPCRNGASCLNVPGSYRCLCTKGYEGRDCA). Ser-922 is a glycosylation site (O-linked (Fuc...) serine). Residues 946–982 (NTDDCASFPCQNGGTCLDGIGDYSCLCVDGFDGKHCE) form the EGF-like 24; calcium-binding domain. An O-linked (Glc...) serine glycan is attached at Ser-952. An O-linked (Fuc...) threonine glycan is attached at Thr-960. The region spanning 984 to 1020 (DINECLSQPCQNGATCSQYVNSYTCTCPLGFSGINCQ) is the EGF-like 25 domain. Ser-990 carries an O-linked (Glc...) serine glycan. An O-linked (Fuc...) threonine glycan is attached at Thr-998. One can recognise an EGF-like 26; calcium-binding domain in the interval 1022 to 1058 (NDEDCTESSCLNGGSCIDGINGYNCSCLAGYSGANCQ). An O-linked (Fuc...) serine glycan is attached at Ser-1036. The N-linked (GlcNAc...) asparagine glycan is linked to Asn-1045. EGF-like domains lie at 1060-1096 (KLNKCDSNPCLNGATCHEQNNEYTCHCPSGFTGKQCS), 1098-1134 (YVDWCGQSPCENGATCSQMKHQFSCKCSAGWTGKLCD), and 1136-1181 (QTIS…SYCQ). O-linked (Glc...) serine glycosylation is present at Ser-1066. Residue Thr-1074 is glycosylated (O-linked (Fuc...) threonine). Thr-1112 carries O-linked (Fuc...) threonine glycosylation. Asn-1157 carries an N-linked (GlcNAc...) asparagine glycan. The EGF-like 30; calcium-binding domain occupies 1183 to 1219 (EIDECQSQPCQNGGTCRDLIGAYECQCRQGFQGQNCE). O-linked (Glc...) serine glycosylation is present at Ser-1189. Thr-1197 is a glycosylation site (O-linked (Fuc...) threonine). Residues 1221–1257 (NIDDCAPNPCQNGGTCHDRVMNFSCSCPPGTMGIICE) enclose the EGF-like 31; calcium-binding domain. O-linked (Fuc...) threonine glycosylation is present at Thr-1235. N-linked (GlcNAc...) asparagine glycosylation occurs at Asn-1242. The region spanning 1259–1295 (NKDDCKPGACHNNGSCIDRVGGFECVCQPGFVGARCE) is the EGF-like 32; calcium-binding domain. A glycan (N-linked (GlcNAc...) asparagine) is linked at Asn-1271. A glycan (O-linked (Fuc...) serine) is linked at Ser-1273. EGF-like domains are found at residues 1297–1335 (DINECLSNPCSNAGTLDCVQLVNNYHCNCRPGHMGRHCE), 1337–1373 (KVDFCAQSPCQNGGNCNIRQSGHHCICNNGFYGKNCE), 1375–1412 (SGQDCDSNPCRVGNCVVADEGFGYRCECPRGTLGEHCE), and 1415–1451 (TLDECSPNPCAQGAACEDLLGDYECLCPSKWKGKRCD). Residue Ser-1303 is glycosylated (O-linked (Glc...) serine). The O-linked (Glc...) serine glycan is linked to Ser-1381. LNR repeat units follow at residues 1482 to 1521 (CDKRGCTEKQGNGICDSDCNTYACNFDGNDCSLGINPWAN), 1522 to 1557 (CTANECWNKFKNGKCNEECNNAACHYDGHDCERKLK), and 1559 to 1599 (CDSL…TQSP). Asn-1521 is a glycosylation site (N-linked (GlcNAc...) asparagine). 6 disulfide bridges follow: Cys-1522-Cys-1545, Cys-1527-Cys-1540, Cys-1536-Cys-1552, Cys-1559-Cys-1585, Cys-1567-Cys-1580, and Cys-1576-Cys-1592. Residues Asn-1594 and Asn-1627 are each glycosylated (N-linked (GlcNAc...) asparagine). Residues 1746 to 1766 (VITGIILVIIALAFFGMVLST) form a helical membrane-spanning segment. Topologically, residues 1767 to 2703 (QRKRAHGVTW…ANKGSEAIYI (937 aa)) are cytoplasmic. The segment at 1810-1850 (QSQGVGQPGAHWSDDESDMPLPKRQRSDPVSGVGLGNNGGY) is disordered. ANK repeat units follow at residues 1901 to 1945 (CGLT…ELNA), 1950 to 1979 (TGETSLHLAARFARADAAKRLLDAGADANC), 1983 to 2013 (TGRTPLHAAVAADAMGVFQILLRNRATNLNA), 2017 to 2046 (DGTTPLILAARLAIEGMVEDLITADADINA), 2050 to 2079 (SGKTALHWAAAVNNTEAVNILLMHHANRDA), 2083 to 2112 (KDETPLFLAAREGSYEACKALLDNFANREI), and 2116 to 2139 (MDRLPRDVASERLHHDIVRLLDEH). The segment at 2172–2257 (TVISAGNGGN…LTGGVSGVPG (86 aa)) is disordered. Residues 2228-2238 (KKTSAASKKAA) show a composition bias toward low complexity. The segment at 2325 to 2328 (PPSY) is interaction with Nedd4. Disordered regions lie at residues 2399–2452 (SGAG…PTSP), 2488–2524 (GGGGGGGVGQGPQNSPVSLGIISPTGSDMGIMLAPPQ), 2579–2620 (LDLN…PSSQ), and 2632–2703 (PSSQ…AIYI). Positions 2414–2429 (PYSNQSPPHSVQSSLA) are enriched in polar residues. Ser-2447 carries the phosphoserine modification. The span at 2488–2497 (GGGGGGGVGQ) shows a compositional bias: gly residues. Residues 2598 to 2619 (PPSIQSSMSGSSPSTNMLSPSS) are compositionally biased toward low complexity. Positions 2632-2653 (PSSQHSGGHTPQHLVQTLDSYP) are enriched in polar residues. Positions 2659 to 2675 (SPGHWSSSSPRSNSDWS) are enriched in low complexity. The segment covering 2677–2687 (GVQSPAANNLY) has biased composition (polar residues).

It belongs to the NOTCH family. As to quaternary structure, homomer. Interacts with Su(H) when activated. Interacts with Dx via its ANK repeats. Interacts with Delta via the EGF repeats and the Delta EGF repeats. Interacts with Nedd4 and Su(dx). Interacts with O-fut1; the interaction glycosylates N and transports N to early endosomes. Interacts with Akap200; the interaction stabilizes N/Notch protein levels by preventing Cbl-mediated ubiquitination and subsequent lysosomal degradation of N/Notch. In terms of processing, upon binding its ligands such as Delta or Serrate, it is cleaved (S2 cleavage) in its extracellular domain, close to the transmembrane domain. S2 cleavage is probably mediated by Kuz. It is then cleaved (S3 cleavage) downstream of its transmembrane domain, releasing it from the cell membrane. S3 cleavage requires Psn. Post-translationally, O-glycosylated. Three forms of O-glycosylation (O-fucosylation, O-glucosylation and O-GlcNAcylation) are detected. O-fucosylated by O-fut1 and fng in the EGF repeat domain inhibits both Serrate/Ser- and Delta/Dl-binding. O-glucosylation by rumi in the endoplasmic reticulum is necessary for correct folding and signaling. Ubiquitinated by various ubiquitin ligases; which promotes ligand-independent endocytosis and proteasomal degradation. Ubiquitinated by Nedd4. May also be ubiquitinated by Su(dx) and Cbl. Mono-ubiquitinated, possibly by dx/deltex; this may be involved in the ESCRT-III mediated targeting to multivesicular bodies.

The protein localises to the cell membrane. Its subcellular location is the endosome. The protein resides in the multivesicular body. It is found in the nucleus. Its function is as follows. Essential signaling protein which has a major role in many developmental processes. Functions as a receptor for membrane-bound ligands Delta and Serrate to regulate cell-fate determination. Upon ligand activation, and releasing from the cell membrane, the Notch intracellular domain (NICD) forms a transcriptional activator complex with Su(H) (Suppressor of hairless) and activates genes of the E(spl) complex. Regulates oogenesis, the differentiation of the ectoderm and the development of the central and peripheral nervous system, eye, wing disk, muscles and segmental appendages such as antennae and legs, through lateral inhibition or induction. Regulates neuroblast self-renewal, identity and proliferation through the regulation of bHLH-O proteins; in larval brains, involved in the maintenance of type II neuroblast self-renewal and identity by suppressing erm expression together with pnt; might also regulate dpn expression through the activation of the transcriptional regulator Su(H). Targeted for ESCRT-mediated endosomal sequestration and lysosomal degradation by various E3 ubiquitin ligases to regulate the Notch signaling pathway. Can undergo ligand-dependent and non-canonical ligand-independent activation. Ligand-independent activation is dependent on endosome acidification and probably occurs in late endosomes or lysosome. Ectopic ligand-independent activation occurs when disruption of the endolysosomal pathway, particularly of the ESCRT-III complex, prevents sequestration of the receptor in intraluminal vesicles of multivesicular bodies. This is Neurogenic locus Notch protein from Drosophila melanogaster (Fruit fly).